The sequence spans 513 residues: Histidine ammonia-lyase (513 aa).

Positions 142-144 (ASG) form a cross-link, 5-imidazolinone (Ala-Gly). Serine 143 carries the 2,3-didehydroalanine (Ser) modification.

Belongs to the PAL/histidase family. Contains an active site 4-methylidene-imidazol-5-one (MIO), which is formed autocatalytically by cyclization and dehydration of residues Ala-Ser-Gly.

It localises to the cytoplasm. It carries out the reaction L-histidine = trans-urocanate + NH4(+). The protein operates within amino-acid degradation; L-histidine degradation into L-glutamate; N-formimidoyl-L-glutamate from L-histidine: step 1/3. In Methylobacterium sp. (strain 4-46), this protein is Histidine ammonia-lyase.